The primary structure comprises 472 residues: Aspartyl/glutamyl-tRNA(Asn/Gln) amidotransferase subunit B (472 aa).

Belongs to the GatB/GatE family. GatB subfamily. Heterotrimer of A, B and C subunits.

The enzyme catalyses L-glutamyl-tRNA(Gln) + L-glutamine + ATP + H2O = L-glutaminyl-tRNA(Gln) + L-glutamate + ADP + phosphate + H(+). The catalysed reaction is L-aspartyl-tRNA(Asn) + L-glutamine + ATP + H2O = L-asparaginyl-tRNA(Asn) + L-glutamate + ADP + phosphate + 2 H(+). In terms of biological role, allows the formation of correctly charged Asn-tRNA(Asn) or Gln-tRNA(Gln) through the transamidation of misacylated Asp-tRNA(Asn) or Glu-tRNA(Gln) in organisms which lack either or both of asparaginyl-tRNA or glutaminyl-tRNA synthetases. The reaction takes place in the presence of glutamine and ATP through an activated phospho-Asp-tRNA(Asn) or phospho-Glu-tRNA(Gln). In Campylobacter jejuni subsp. doylei (strain ATCC BAA-1458 / RM4099 / 269.97), this protein is Aspartyl/glutamyl-tRNA(Asn/Gln) amidotransferase subunit B.